The chain runs to 227 residues: UPF0173 metal-dependent hydrolase YtkL (227 aa).

This sequence belongs to the UPF0173 family.

The protein is UPF0173 metal-dependent hydrolase YtkL (ytkL) of Bacillus subtilis (strain 168).